The chain runs to 581 residues: Estrogen receptor (581 aa).

Residues 1-144 form a modulating region; it reads MYPEDSRGSG…GFEIAKEMRF (144 aa). Disordered regions lie at residues 45 to 66 and 96 to 122; these read APLDAHGPPSDGSLQSLGSGPN and PVYRSSVPSSQQSVSREDQCGTSDDSY. Residues 56-66 are compositionally biased toward polar residues; sequence GSLQSLGSGPN. Positions 100-109 are enriched in low complexity; that stretch reads SSVPSSQQSV. 2 consecutive NR C4-type zinc fingers follow at residues 145–165 and 181–205; these read CAVCSDYASGYHYGVWSCEGC and CPATNQCTIDRNRRKSCQACRLRKC. A DNA-binding region (nuclear receptor) is located at residues 145-210; sequence CAVCSDYASG…RLRKCYEVGM (66 aa). The interval 211–272 is hinge; the sequence is MKGGMRKDRG…GGGKSSMISM (62 aa). Residues 216-246 are compositionally biased toward basic and acidic residues; sequence RKDRGRVLRRDKQRTGTSDRDKASKGLEHRT. Residues 216 to 268 are disordered; it reads RKDRGRVLRRDKQRTGTSDRDKASKGLEHRTAPPQDRRKHISSSAGGGGGKSS. Residues 273–509 enclose the NR LBD domain; sequence PPDQVLLLLQ…DLLLEMLDAH (237 aa). Residues 516–528 show a composition bias toward basic and acidic residues; it reads RPAETWSQADREP. The tract at residues 516–581 is disordered; that stretch reads RPAETWSQAD…GSRSECTHIL (66 aa). Residues 536-547 are compositionally biased toward gly residues; that stretch reads SGGGGGGGGGSS.

Belongs to the nuclear hormone receptor family. NR3 subfamily. Binds DNA as a homodimer. Can form a heterodimer with ER-beta.

The protein resides in the nucleus. Its function is as follows. The steroid hormones and their receptors are involved in the regulation of eukaryotic gene expression and affect cellular proliferation and differentiation in target tissues. The sequence is that of Estrogen receptor (esr1) from Pagrus major (Red sea bream).